Consider the following 181-residue polypeptide: ATP-dependent protease subunit HslV (181 aa).

T7 is a catalytic residue. Na(+) contacts are provided by A166, C169, and T172.

It belongs to the peptidase T1B family. HslV subfamily. A double ring-shaped homohexamer of HslV is capped on each side by a ring-shaped HslU homohexamer. The assembly of the HslU/HslV complex is dependent on binding of ATP.

The protein resides in the cytoplasm. The enzyme catalyses ATP-dependent cleavage of peptide bonds with broad specificity.. With respect to regulation, allosterically activated by HslU binding. In terms of biological role, protease subunit of a proteasome-like degradation complex believed to be a general protein degrading machinery. The protein is ATP-dependent protease subunit HslV of Anaeromyxobacter dehalogenans (strain 2CP-1 / ATCC BAA-258).